A 181-amino-acid chain; its full sequence is Crossover junction endodeoxyribonuclease RuvC (181 aa).

Residues aspartate 8, glutamate 67, and aspartate 139 contribute to the active site. The Mg(2+) site is built by aspartate 8, glutamate 67, and aspartate 139.

It belongs to the RuvC family. Homodimer which binds Holliday junction (HJ) DNA. The HJ becomes 2-fold symmetrical on binding to RuvC with unstacked arms; it has a different conformation from HJ DNA in complex with RuvA. In the full resolvosome a probable DNA-RuvA(4)-RuvB(12)-RuvC(2) complex forms which resolves the HJ. The cofactor is Mg(2+).

Its subcellular location is the cytoplasm. It carries out the reaction Endonucleolytic cleavage at a junction such as a reciprocal single-stranded crossover between two homologous DNA duplexes (Holliday junction).. The RuvA-RuvB-RuvC complex processes Holliday junction (HJ) DNA during genetic recombination and DNA repair. Endonuclease that resolves HJ intermediates. Cleaves cruciform DNA by making single-stranded nicks across the HJ at symmetrical positions within the homologous arms, yielding a 5'-phosphate and a 3'-hydroxyl group; requires a central core of homology in the junction. The consensus cleavage sequence is 5'-(A/T)TT(C/G)-3'. Cleavage occurs on the 3'-side of the TT dinucleotide at the point of strand exchange. HJ branch migration catalyzed by RuvA-RuvB allows RuvC to scan DNA until it finds its consensus sequence, where it cleaves and resolves the cruciform DNA. The polypeptide is Crossover junction endodeoxyribonuclease RuvC (Acinetobacter baumannii (strain SDF)).